Here is a 316-residue protein sequence, read N- to C-terminus: Cuticle collagen 13 (316 aa).

A signal peptide spans 1–36 (MSEDLKQIAQETESLRKVAFFGIAVSTIATLTAIIA). 2 stretches are compositionally biased toward low complexity: residues 127 to 157 (SGAA…PGQD) and 183 to 204 (APGQ…GAAL). The tract at residues 127–316 (SGAAGPAGSP…CPPPRTAPGY (190 aa)) is disordered. 5 triple-helical region regions span residues 128–157 (GAAG…PGQD), 176–202 (GPPG…SGGA), 206–235 (GPPG…PGQV), 240–266 (GTPG…AGSS), and 269–304 (GGPG…EGAC). Residues 205–217 (PGPPGPAGPPGPA) show a composition bias toward pro residues. Residues 219–234 (QPGSNGNAGAPGAPGQ) are compositionally biased toward low complexity. Residues 241–251 (TPGPAGPPGSP) show a composition bias toward pro residues. Low complexity-rich tracts occupy residues 256-266 (APGQPGQAGSS) and 276-295 (DAGA…PGQD). The span at 307–316 (CPPPRTAPGY) shows a compositional bias: pro residues.

Belongs to the cuticular collagen family. In terms of assembly, collagen polypeptide chains are complexed within the cuticle by disulfide bonds and other types of covalent cross-links.

Its function is as follows. Nematode cuticles are composed largely of collagen-like proteins. The cuticle functions both as an exoskeleton and as a barrier to protect the worm from its environment. This Caenorhabditis elegans protein is Cuticle collagen 13 (col-13).